The chain runs to 127 residues: Large ribosomal subunit protein uL22 (127 aa).

This sequence belongs to the universal ribosomal protein uL22 family. In terms of assembly, part of the 50S ribosomal subunit.

Functionally, this protein binds specifically to 23S rRNA; its binding is stimulated by other ribosomal proteins, e.g. L4, L17, and L20. It is important during the early stages of 50S assembly. It makes multiple contacts with different domains of the 23S rRNA in the assembled 50S subunit and ribosome. In terms of biological role, the globular domain of the protein is located near the polypeptide exit tunnel on the outside of the subunit, while an extended beta-hairpin is found that lines the wall of the exit tunnel in the center of the 70S ribosome. This is Large ribosomal subunit protein uL22 from Rhizorhabdus wittichii (strain DSM 6014 / CCUG 31198 / JCM 15750 / NBRC 105917 / EY 4224 / RW1) (Sphingomonas wittichii).